Here is a 133-residue protein sequence, read N- to C-terminus: MQRVTITLDDDLLETLDSLSQRRGYNNRSEAIRDILRSALAQEATQQHGTQGFAVLSYVYEHEKRDLASRIVSTQHHHHELSVATLHVHINHDDCLEIAVLKGDMGDVQHFADDVIAQRGVRHGHLQCLPKED.

The Ni(2+) site is built by His-76, His-87, His-89, and Cys-95.

The protein belongs to the transcriptional regulatory CopG/NikR family. As to quaternary structure, homotetramer. Requires Ni(2+) as cofactor.

Transcriptional repressor of the nikABCDE operon. Is active in the presence of excessive concentrations of intracellular nickel. The sequence is that of Nickel-responsive regulator from Escherichia coli (strain SE11).